The chain runs to 253 residues: Probable transcriptional regulatory protein AM1_1847 (253 aa).

This sequence belongs to the TACO1 family.

The protein resides in the cytoplasm. The polypeptide is Probable transcriptional regulatory protein AM1_1847 (Acaryochloris marina (strain MBIC 11017)).